The primary structure comprises 322 residues: Lipoyl synthase (322 aa).

Residues cysteine 69, cysteine 74, cysteine 80, cysteine 95, cysteine 99, cysteine 102, and serine 309 each contribute to the [4Fe-4S] cluster site. One can recognise a Radical SAM core domain in the interval 81 to 298 (FNHGTATFMI…KEIALELGFT (218 aa)).

Belongs to the radical SAM superfamily. Lipoyl synthase family. The cofactor is [4Fe-4S] cluster.

It localises to the cytoplasm. It catalyses the reaction [[Fe-S] cluster scaffold protein carrying a second [4Fe-4S](2+) cluster] + N(6)-octanoyl-L-lysyl-[protein] + 2 oxidized [2Fe-2S]-[ferredoxin] + 2 S-adenosyl-L-methionine + 4 H(+) = [[Fe-S] cluster scaffold protein] + N(6)-[(R)-dihydrolipoyl]-L-lysyl-[protein] + 4 Fe(3+) + 2 hydrogen sulfide + 2 5'-deoxyadenosine + 2 L-methionine + 2 reduced [2Fe-2S]-[ferredoxin]. It participates in protein modification; protein lipoylation via endogenous pathway; protein N(6)-(lipoyl)lysine from octanoyl-[acyl-carrier-protein]: step 2/2. In terms of biological role, catalyzes the radical-mediated insertion of two sulfur atoms into the C-6 and C-8 positions of the octanoyl moiety bound to the lipoyl domains of lipoate-dependent enzymes, thereby converting the octanoylated domains into lipoylated derivatives. This is Lipoyl synthase from Photobacterium profundum (strain SS9).